Consider the following 378-residue polypeptide: MKYDKDRVKESLTIEDIHKILKDLGSENNLWDQQGNPIYRTVCHNASGGSYKLYYYHEAKQFHCYTECGDNFDVFELVIRAKSQKGINISFNQAIEYVAKIAGRTFGFGNRETYINNDLIDDWEWMGKFKKKKKIHIELPSFNETVLDVFVPYPHQLWLGEGISHKTLKEFEIGYYFRPHTEGITIPHRDLNNRLIGIRRRSMIKEEVDAGYKYMPLKVGNILYNHQTMMNLYGLHKTKNSIERFKKVLIFESEKSVLKCQDFYGESNFTCAVCSSNISNFHRDILLSLGVEEVFIALDKYRPPKEHETEEKYQEKLVEYQKKILKLAAKFTPYVRVYVLWDYEGLLDYKDSPADKGKETLEELMRRKIEIGTDEGGI.

The polypeptide is SPbeta prophage-derived uncharacterized protein YorJ (yorJ) (Bacillus subtilis (strain 168)).